A 166-amino-acid polypeptide reads, in one-letter code: Small ribosomal subunit protein uS5 (166 aa).

Residues 11-74 (LQEKLIAVNR…EKARRNMMNV (64 aa)) enclose the S5 DRBM domain.

The protein belongs to the universal ribosomal protein uS5 family. As to quaternary structure, part of the 30S ribosomal subunit. Contacts proteins S4 and S8.

In terms of biological role, with S4 and S12 plays an important role in translational accuracy. Its function is as follows. Located at the back of the 30S subunit body where it stabilizes the conformation of the head with respect to the body. This is Small ribosomal subunit protein uS5 from Buchnera aphidicola subsp. Acyrthosiphon kondoi (Acyrthosiphon kondoi symbiotic bacterium).